The following is a 264-amino-acid chain: MVWLPRVPCVAAVILLLTVLSPPVALVRDSRPWFLEYCKSECHFYNGTQRVRFLKRYFYNLEENLRFDSDVGEFRAVTELGRPDAENWNSQPEILEQKRAAVDTYCRHNYEIFDNFLVRRRVEPTVTVYPTKTQPLEHHNLLVCSVSDFYPGNIEVRWFRNGKEEKTGIVSTGLVRNGDWTFQTLVMLETVPQSGEVYTCQVEHPSLTDPVTVEWKAQSTSAQNKMLSGVGGFVLGLLFLGAGLFIYFRNQKGQSGLQPTGLLS.

The first 26 residues, 1 to 26 (MVWLPRVPCVAAVILLLTVLSPPVAL), serve as a signal peptide directing secretion. Positions 27–121 (VRDSRPWFLE…IFDNFLVRRR (95 aa)) are beta-1. Topologically, residues 27–225 (VRDSRPWFLE…KAQSTSAQNK (199 aa)) are extracellular. Cystine bridges form between cysteine 38–cysteine 106 and cysteine 144–cysteine 200. Asparagine 46 carries N-linked (GlcNAc...) asparagine glycosylation. Positions 122 to 225 (VEPTVTVYPT…KAQSTSAQNK (104 aa)) are beta-2. Positions 124 to 214 (PTVTVYPTKT…PSLTDPVTVE (91 aa)) constitute an Ig-like C1-type domain. Residues 226-246 (MLSGVGGFVLGLLFLGAGLFI) form a helical membrane-spanning segment. The Cytoplasmic segment spans residues 247-264 (YFRNQKGQSGLQPTGLLS).

This sequence belongs to the MHC class II family.

The protein resides in the membrane. The sequence is that of H-2 class II histocompatibility antigen, E-Q beta chain from Mus musculus (Mouse).